The sequence spans 61 residues: Protein translocase subunit SecE (61 aa).

Residues 1–34 (MAELQERIRHFWKESRRAFLVTKKPNWATYKRAA) lie on the Cytoplasmic side of the membrane. Residues 35–55 (KITGLGIILIGLIGMLIRIVG) form a helical membrane-spanning segment. The Extracellular portion of the chain corresponds to 56-61 (ILILGG).

It belongs to the SecE/SEC61-gamma family. As to quaternary structure, component of the Sec protein translocase complex. Heterotrimer consisting of alpha (SecY), beta (SecG) and gamma (SecE) subunits. The heterotrimers can form oligomers, although 1 heterotrimer is thought to be able to translocate proteins. Interacts with the ribosome. May interact with SecDF, and other proteins may be involved.

It localises to the cell membrane. Its function is as follows. Essential subunit of the protein translocation channel SecYEG. Clamps together the 2 halves of SecY. May contact the channel plug during translocation. The chain is Protein translocase subunit SecE from Pyrococcus furiosus (strain ATCC 43587 / DSM 3638 / JCM 8422 / Vc1).